The chain runs to 207 residues: Large ribosomal subunit protein uL4 (207 aa).

The disordered stretch occupies residues 55 to 76; it reads ALVSGGGKKPWRQKGTGRARHG. Residues 63-76 are compositionally biased toward basic residues; the sequence is KPWRQKGTGRARHG.

It belongs to the universal ribosomal protein uL4 family. In terms of assembly, part of the 50S ribosomal subunit.

Functionally, one of the primary rRNA binding proteins, this protein initially binds near the 5'-end of the 23S rRNA. It is important during the early stages of 50S assembly. It makes multiple contacts with different domains of the 23S rRNA in the assembled 50S subunit and ribosome. Forms part of the polypeptide exit tunnel. The sequence is that of Large ribosomal subunit protein uL4 from Phytoplasma mali (strain AT).